The chain runs to 108 residues: Phosphoribosyl-ATP pyrophosphatase (108 aa).

The protein belongs to the PRA-PH family.

It localises to the cytoplasm. It carries out the reaction 1-(5-phospho-beta-D-ribosyl)-ATP + H2O = 1-(5-phospho-beta-D-ribosyl)-5'-AMP + diphosphate + H(+). It participates in amino-acid biosynthesis; L-histidine biosynthesis; L-histidine from 5-phospho-alpha-D-ribose 1-diphosphate: step 2/9. This Pelobacter propionicus (strain DSM 2379 / NBRC 103807 / OttBd1) protein is Phosphoribosyl-ATP pyrophosphatase.